The sequence spans 740 residues: NAD(P)H-quinone oxidoreductase subunit 5, chloroplastic (740 aa).

The next 16 membrane-spanning stretches (helical) occupy residues 9-29 (WIIP…LLLF), 40-60 (WSFL…YLSI), 89-109 (IDPL…FVLI), 125-145 (FAYM…SNLI), 147-167 (IYFF…FWFT), 185-205 (GDFG…SFEF), 221-241 (VNLL…IAKS), 258-278 (TPIS…FLVA), 283-303 (LFIV…ITIL), 327-347 (LGYM…FHLI), 354-374 (ALLF…VGYS), 396-416 (TAFL…CFWS), 425-445 (LLFS…TAFY), 547-567 (ILFP…IGIP), 606-626 (FSVS…KPFY), and 718-738 (ISSY…FLKI).

Belongs to the complex I subunit 5 family. In terms of assembly, NDH is composed of at least 16 different subunits, 5 of which are encoded in the nucleus.

It localises to the plastid. The protein localises to the chloroplast thylakoid membrane. It carries out the reaction a plastoquinone + NADH + (n+1) H(+)(in) = a plastoquinol + NAD(+) + n H(+)(out). It catalyses the reaction a plastoquinone + NADPH + (n+1) H(+)(in) = a plastoquinol + NADP(+) + n H(+)(out). NDH shuttles electrons from NAD(P)H:plastoquinone, via FMN and iron-sulfur (Fe-S) centers, to quinones in the photosynthetic chain and possibly in a chloroplast respiratory chain. The immediate electron acceptor for the enzyme in this species is believed to be plastoquinone. Couples the redox reaction to proton translocation, and thus conserves the redox energy in a proton gradient. This chain is NAD(P)H-quinone oxidoreductase subunit 5, chloroplastic (ndhF), found in Aethionema grandiflorum (Persian stone-cress).